The chain runs to 440 residues: Light-independent protochlorophyllide reductase subunit N (440 aa).

The interval 1 to 24 (MTCRPALSDSHPPEPGTPSSPSFG) is disordered. Positions 42, 67, and 128 each coordinate [4Fe-4S] cluster.

This sequence belongs to the BchN/ChlN family. As to quaternary structure, protochlorophyllide reductase is composed of three subunits; BchL, BchN and BchB. Forms a heterotetramer of two BchB and two BchN subunits. It depends on [4Fe-4S] cluster as a cofactor.

It catalyses the reaction chlorophyllide a + oxidized 2[4Fe-4S]-[ferredoxin] + 2 ADP + 2 phosphate = protochlorophyllide a + reduced 2[4Fe-4S]-[ferredoxin] + 2 ATP + 2 H2O. It participates in porphyrin-containing compound metabolism; bacteriochlorophyll biosynthesis (light-independent). Component of the dark-operative protochlorophyllide reductase (DPOR) that uses Mg-ATP and reduced ferredoxin to reduce ring D of protochlorophyllide (Pchlide) to form chlorophyllide a (Chlide). This reaction is light-independent. The NB-protein (BchN-BchB) is the catalytic component of the complex. This is Light-independent protochlorophyllide reductase subunit N from Rhodospirillum rubrum (strain ATCC 11170 / ATH 1.1.1 / DSM 467 / LMG 4362 / NCIMB 8255 / S1).